The chain runs to 884 residues: Translation initiation factor IF-2 (884 aa).

The interval 93-288 (VNTPEAEQAK…KGKRKPSTLQ (196 aa)) is disordered. The segment covering 99-209 (EQAKAEEQAQ…KMAAENEGKW (111 aa)) has biased composition (basic and acidic residues). The segment covering 216 to 229 (QTESADYHVTTSQH) has biased composition (polar residues). Residues 231-246 (RAAEDENDAKVEGDRR) are compositionally biased toward basic and acidic residues. Basic residues predominate over residues 247-261 (SRTRGGKATKQKKGN). Positions 262 to 275 (KLSESKADREEARA) are enriched in basic and acidic residues. Residues 383-552 (HRAPVVTIMG…LLQAEVLELK (170 aa)) form the tr-type G domain. The interval 392 to 399 (GHVDHGKT) is G1. 392 to 399 (GHVDHGKT) is a binding site for GTP. The G2 stretch occupies residues 417–421 (GITQH). Residues 438-441 (DTPG) are G3. Residues 438-442 (DTPGH) and 492-495 (NKID) contribute to the GTP site. Residues 492–495 (NKID) form a G4 region. Positions 528 to 530 (SAK) are G5.

This sequence belongs to the TRAFAC class translation factor GTPase superfamily. Classic translation factor GTPase family. IF-2 subfamily.

Its subcellular location is the cytoplasm. Functionally, one of the essential components for the initiation of protein synthesis. Protects formylmethionyl-tRNA from spontaneous hydrolysis and promotes its binding to the 30S ribosomal subunits. Also involved in the hydrolysis of GTP during the formation of the 70S ribosomal complex. This is Translation initiation factor IF-2 from Yersinia pestis bv. Antiqua (strain Antiqua).